The following is a 361-amino-acid chain: MPVLLDSSRAPRLDALLSKGNTQGLECQIDSPTGDLPLIAGIGTLASAGAQEIAFLSNPRYQSQVASTAAAAVIVTLDVAQALRAQGSTLVFVVCRHPYLLYARLAQWFDAERRGLPPAGVHPSAVVAPDAVIEEGASVGPQCVVDSGARIGRGASLGPGCIVGQGSTVGANSRLHARVTLYDGVHVGARAIIHSGAVLGADGFGFAPDPTLGKGAWGKIPQLGGVTVGNDVEIGANTTIDRGAIENTIIGDGVKLDNLIMIAHNVRIGAHTAVAACVGIAGSTVIGERCIVGGAAMFSGHLSICDDVTISGGTPVTSSITKPGRYTGVYPYSEHGEWQRNAAVIQQLALLRRRVRALEKA.

H264 (proton acceptor) is an active-site residue.

This sequence belongs to the transferase hexapeptide repeat family. LpxD subfamily. As to quaternary structure, homotrimer.

It catalyses the reaction a UDP-3-O-[(3R)-3-hydroxyacyl]-alpha-D-glucosamine + a (3R)-hydroxyacyl-[ACP] = a UDP-2-N,3-O-bis[(3R)-3-hydroxyacyl]-alpha-D-glucosamine + holo-[ACP] + H(+). It functions in the pathway bacterial outer membrane biogenesis; LPS lipid A biosynthesis. In terms of biological role, catalyzes the N-acylation of UDP-3-O-acylglucosamine using 3-hydroxyacyl-ACP as the acyl donor. Is involved in the biosynthesis of lipid A, a phosphorylated glycolipid that anchors the lipopolysaccharide to the outer membrane of the cell. The sequence is that of UDP-3-O-acylglucosamine N-acyltransferase from Bordetella avium (strain 197N).